A 431-amino-acid polypeptide reads, in one-letter code: Chaperone SurA (431 aa).

Positions 1–22 (MNLKKLLTSAVLSISLCQSAFA) are cleaved as a signal peptide. 2 consecutive PpiC domains span residues 173–274 (AEEY…KVQD) and 283–383 (TTET…QLLD).

The protein resides in the periplasm. The catalysed reaction is [protein]-peptidylproline (omega=180) = [protein]-peptidylproline (omega=0). Functionally, chaperone involved in the correct folding and assembly of outer membrane proteins. Recognizes specific patterns of aromatic residues and the orientation of their side chains, which are found more frequently in integral outer membrane proteins. May act in both early periplasmic and late outer membrane-associated steps of protein maturation. This chain is Chaperone SurA, found in Pseudoalteromonas translucida (strain TAC 125).